Reading from the N-terminus, the 345-residue chain is Krueppel-like factor 3 (345 aa).

Residues Met-1–Ser-74 are repressor domain. A Glycyl lysine isopeptide (Lys-Gly) (interchain with G-Cter in SUMO) cross-link involves residue Lys-10. The short motif at Glu-60 to Lys-68 is the 9aaTAD; inactive element. The CTBP-binding motif motif lies at Pro-61 to Thr-65. The disordered stretch occupies residues Val-66–Pro-112. Residue Lys-68 forms a Glycyl lysine isopeptide (Lys-Gly) (interchain with G-Cter in SUMO2) linkage. Composition is skewed to low complexity over residues Ser-70–Ser-81 and Ser-92–Ser-108. Phosphoserine occurs at positions 71, 92, 101, 108, and 111. Glycyl lysine isopeptide (Lys-Gly) (interchain with G-Cter in SUMO2) cross-links involve residues Lys-196 and Lys-198. 3 positions are modified to phosphoserine: Ser-216, Ser-224, and Ser-250. 3 consecutive C2H2-type zinc fingers follow at residues His-260–His-284, Tyr-290–His-314, and Phe-320–His-342.

Belongs to the krueppel C2H2-type zinc-finger protein family. In terms of assembly, monomer. In terms of processing, sumoylated with SUMO1. Sumoylation is enhanced by PIAS1, PIAS2alpha and PIAS2beta, and PIAS4, but not by Pc2. Enhances transcriptional repression, but has no effect on DNA binding. Sumoylation on Lys-198 is the major site.

It localises to the nucleus. In terms of biological role, binds to the CACCC box of erythroid cell-expressed genes. May play a role in hematopoiesis. In Homo sapiens (Human), this protein is Krueppel-like factor 3 (KLF3).